Consider the following 118-residue polypeptide: Large ribosomal subunit protein uL24 (118 aa).

Belongs to the universal ribosomal protein uL24 family. As to quaternary structure, part of the 50S ribosomal subunit.

Its function is as follows. One of two assembly initiator proteins, it binds directly to the 5'-end of the 23S rRNA, where it nucleates assembly of the 50S subunit. One of the proteins that surrounds the polypeptide exit tunnel on the outside of the subunit. The protein is Large ribosomal subunit protein uL24 of Synechococcus sp. (strain WH7803).